We begin with the raw amino-acid sequence, 215 residues long: MIATVILADSIKEAIEKIKSSSSDLYELRADSLKDYSKLELLEPYSEKLVVTIRSKDEGGFKELSDEKRLELYSKFLEIKPRYVDVEFRSKIKDEVMEIAKRVGSRVILSYHNFRETPPFGVLYNLLEDMESEGADIVKIVTHASSPKDNIRIIRLYEFADNLIAFCMGSKGKISRIFSSMYSPITYVALDKKAAPGQLTLEELRVILKILGEGR.

3-dehydroquinate contacts are provided by residues 27–29 and R54; that span reads ELR. The Proton donor/acceptor role is filled by H112. The active-site Schiff-base intermediate with substrate is the K139. Residues R176 and Q198 each coordinate 3-dehydroquinate.

Belongs to the type-I 3-dehydroquinase family. Homodimer.

It catalyses the reaction 3-dehydroquinate = 3-dehydroshikimate + H2O. Its pathway is metabolic intermediate biosynthesis; chorismate biosynthesis; chorismate from D-erythrose 4-phosphate and phosphoenolpyruvate: step 3/7. Involved in the third step of the chorismate pathway, which leads to the biosynthesis of aromatic amino acids. Catalyzes the cis-dehydration of 3-dehydroquinate (DHQ) and introduces the first double bond of the aromatic ring to yield 3-dehydroshikimate. This is 3-dehydroquinate dehydratase from Pyrococcus abyssi (strain GE5 / Orsay).